Consider the following 605-residue polypeptide: Apoptosis-inducing factor 3 (605 aa).

Residues 18 to 29 (VLPEKERGKEEL) are compositionally biased toward basic and acidic residues. The disordered stretch occupies residues 18–44 (VLPEKERGKEELSASGKGSPRGYQGNG). The region spanning 70-165 (ATVCHVKDLE…VKIEKEKVTI (96 aa)) is the Rieske domain. Positions 109, 111, 128, and 131 each coordinate [2Fe-2S] cluster. Residues 201-205 (GAGAA), Arg-235, Lys-240, Val-270, Asp-467, and Trp-514 contribute to the FAD site.

It belongs to the FAD-dependent oxidoreductase family.

It localises to the mitochondrion. Induces apoptosis through a caspase dependent pathway. Reduces mitochondrial membrane potential. The protein is Apoptosis-inducing factor 3 (Aifm3) of Mus musculus (Mouse).